Here is a 347-residue protein sequence, read N- to C-terminus: Protein RecA (347 aa).

65 to 72 serves as a coordination point for ATP; that stretch reads GPESSGKT.

The protein belongs to the RecA family.

The protein localises to the cytoplasm. In terms of biological role, can catalyze the hydrolysis of ATP in the presence of single-stranded DNA, the ATP-dependent uptake of single-stranded DNA by duplex DNA, and the ATP-dependent hybridization of homologous single-stranded DNAs. It interacts with LexA causing its activation and leading to its autocatalytic cleavage. The protein is Protein RecA of Marinobacter nauticus (strain ATCC 700491 / DSM 11845 / VT8) (Marinobacter aquaeolei).